Reading from the N-terminus, the 96-residue chain is UPF0213 protein BCE_0033 (96 aa).

The GIY-YIG domain occupies 4–79 (NKHCFYVVEC…KQLNRKQKEE (76 aa)).

Belongs to the UPF0213 family.

The sequence is that of UPF0213 protein BCE_0033 from Bacillus cereus (strain ATCC 10987 / NRS 248).